The primary structure comprises 299 residues: MTAFQNAGPSITRLAPAKINLALHVTGRRDDGYHLLDMLVVFADHGDRIHIEKAGSDSFTVSGPFASGIPAGRGNLVLKARDALRQHGGPDLSPVAIHLEKNLPIASGIGGGSSDAAATLLALNTLWQLDLDFEMLAAIGLSLGADLPMCLHGAAHGTPLIARGIGEELNDVSGIAALPMLLVNDGTALATPDVFRALTRRENAPLPPPACEGTDALCAYLRETRNDLLPAAISLAPQIEPKLALLRAKGALYAQMSGSGATCFAIFSDESALTRAAKEIADENPGWFAVPSHSFPSRA.

Lysine 18 is a catalytic residue. ATP is bound at residue 104 to 114 (PIASGIGGGSS). Aspartate 146 is an active-site residue.

The protein belongs to the GHMP kinase family. IspE subfamily.

It catalyses the reaction 4-CDP-2-C-methyl-D-erythritol + ATP = 4-CDP-2-C-methyl-D-erythritol 2-phosphate + ADP + H(+). It functions in the pathway isoprenoid biosynthesis; isopentenyl diphosphate biosynthesis via DXP pathway; isopentenyl diphosphate from 1-deoxy-D-xylulose 5-phosphate: step 3/6. Catalyzes the phosphorylation of the position 2 hydroxy group of 4-diphosphocytidyl-2C-methyl-D-erythritol. The protein is 4-diphosphocytidyl-2-C-methyl-D-erythritol kinase of Brucella abortus biovar 1 (strain 9-941).